The sequence spans 429 residues: MQLRNPELHLGCALALRFLALVSWDIPGARALDNGLARTPTMGWLHWERFMCNLDCQEEPDSCISEKLFMEMAELMVSEGWKDAGYEYLCIDDCWMAPQRDSEGRLQADPQRFPHGIRQLANYVHSKGLKLGIYADVGNKTCAGFPGSFGYYDIDAQTFADWGVDLLKFDGCYCDSLENLADGYKHMSLALNRTGRSIVYSCEWPLYMWPFQKPNYTEIRQYCNHWRNFADIDDSWKSIKSILDWTSFNQERIVDVAGPGGWNDPDMLVIGNFGLSWNQQVTQMALWAIMAAPLFMSNDLRHISPQAKALLQDKDVIAINQDPLGKQGYQLRQGDNFEVWERPLSGLAWAVAMINRQEIGGPRSYTIAVASLGKGVACNPACFITQLLPVKRKLGFYEWTSRLRSHINPTGTVLLQLENTMQMSLKDLL.

The N-terminal stretch at 1–31 (MQLRNPELHLGCALALRFLALVSWDIPGARA) is a signal peptide. Intrachain disulfides connect Cys52–Cys94 and Cys56–Cys63. Asn139 carries an N-linked (GlcNAc...) asparagine glycan. Residues Cys142 and Cys172 are joined by a disulfide bond. Asp170 acts as the Nucleophile in catalysis. A glycan (N-linked (GlcNAc...) asparagine) is linked at Asn192. A disulfide bridge connects residues Cys202 and Cys223. 203–207 (EWPLY) is a binding site for substrate. N-linked (GlcNAc...) asparagine glycosylation occurs at Asn215. Residue Asp231 is the Proton donor of the active site. A disulfide bond links Cys378 and Cys382.

It belongs to the glycosyl hydrolase 27 family. In terms of assembly, homodimer.

It localises to the lysosome. The enzyme catalyses Hydrolysis of terminal, non-reducing alpha-D-galactose residues in alpha-D-galactosides, including galactose oligosaccharides, galactomannans and galactolipids.. It catalyses the reaction a globoside Gb3Cer (d18:1(4E)) + H2O = a beta-D-Gal-(1-&gt;4)-beta-D-Glc-(1&lt;-&gt;1)-Cer(d18:1(4E)) + D-galactose. It carries out the reaction a globoside Gb3Cer + H2O = a beta-D-galactosyl-(1-&gt;4)-beta-D-glucosyl-(1&lt;-&gt;1)-ceramide + D-galactose. Its activity is regulated as follows. Galactosylgalactosylglucosylceramidase activity is stimulated by saposin B and ammonium chloride. Catalyzes the hydrolysis of glycosphingolipids and participates in their degradation in the lysosome. The sequence is that of Alpha-galactosidase A from Homo sapiens (Human).